Here is a 652-residue protein sequence, read N- to C-terminus: Bifunctional protein ThiO/ThiG (652 aa).

The tract at residues 1–366 (MTRDIVIIGG…HYSRSQKQAS (366 aa)) is thiO. Residues 5–19 (IVII…AIAV) and 44–46 (AGM) contribute to the FAD site. A glycine-binding site is contributed by E52. V173 serves as a coordination point for FAD. Glycine-binding residues include R301 and R327. An FAD-binding site is contributed by 325–331 (HYRNGIL). Positions 393-652 (PLIIAGKSFH…ASSPVTGTIS (260 aa)) are thiG. K494 (schiff-base intermediate with DXP) is an active-site residue. Residues G555, 581–582 (AG), and 603–604 (NS) contribute to the 1-deoxy-D-xylulose 5-phosphate site.

It in the N-terminal section; belongs to the DAO family. ThiO subfamily. This sequence in the C-terminal section; belongs to the ThiG family. Interacts with ThiH and ThiS. FAD serves as cofactor.

The protein resides in the cytoplasm. The enzyme catalyses glycine + O2 + H2O = glyoxylate + H2O2 + NH4(+). It catalyses the reaction [ThiS sulfur-carrier protein]-C-terminal-Gly-aminoethanethioate + 2-iminoacetate + 1-deoxy-D-xylulose 5-phosphate = [ThiS sulfur-carrier protein]-C-terminal Gly-Gly + 2-[(2R,5Z)-2-carboxy-4-methylthiazol-5(2H)-ylidene]ethyl phosphate + 2 H2O + H(+). It functions in the pathway cofactor biosynthesis; thiamine diphosphate biosynthesis. In terms of biological role, catalyzes the FAD-dependent oxidative deamination of glycine. Is essential for thiamine biosynthesis since the oxidation of glycine catalyzed by ThiO generates the glycine imine intermediate (dehydroglycine) required for the biosynthesis of the thiazole ring of thiamine pyrophosphate. Catalyzes the rearrangement of 1-deoxy-D-xylulose 5-phosphate (DXP) to produce the thiazole phosphate moiety of thiamine. Sulfur is provided by the thiocarboxylate moiety of the carrier protein ThiS. In vitro, sulfur can be provided by H(2)S. This Nostoc sp. (strain PCC 7120 / SAG 25.82 / UTEX 2576) protein is Bifunctional protein ThiO/ThiG (thiO/thiG).